A 353-amino-acid chain; its full sequence is Quinolinate synthase (353 aa).

The iminosuccinate site is built by H47 and S68. C113 provides a ligand contact to [4Fe-4S] cluster. Residues 139-141 and S156 each bind iminosuccinate; that span reads YAN. C200 lines the [4Fe-4S] cluster pocket. Iminosuccinate-binding positions include 226-228 and T243; that span reads HPE. C297 is a [4Fe-4S] cluster binding site.

This sequence belongs to the quinolinate synthase family. Type 1 subfamily. [4Fe-4S] cluster serves as cofactor.

It localises to the cytoplasm. The catalysed reaction is iminosuccinate + dihydroxyacetone phosphate = quinolinate + phosphate + 2 H2O + H(+). It functions in the pathway cofactor biosynthesis; NAD(+) biosynthesis; quinolinate from iminoaspartate: step 1/1. Its function is as follows. Catalyzes the condensation of iminoaspartate with dihydroxyacetone phosphate to form quinolinate. The protein is Quinolinate synthase of Photobacterium profundum (strain SS9).